Reading from the N-terminus, the 362-residue chain is Lipoprotein p35 (362 aa).

The first 30 residues, 1-30 (MKIKKIKLLKALALTGAFGIVATVPVIVSS), serve as a signal peptide directing secretion. C31 carries N-palmitoyl cysteine lipidation. A lipid anchor (S-diacylglycerol cysteine) is attached at C31. The tract at residues 33-53 (STSENNGNGNGNGGTDGNTQQ) is disordered.

It belongs to the p35 lipoprotein family. In terms of processing, the N-terminus is blocked.

The protein localises to the cell membrane. Major M.penetrans antigen. The protein is Lipoprotein p35 of Malacoplasma penetrans (strain HF-2) (Mycoplasma penetrans).